We begin with the raw amino-acid sequence, 818 residues long: Beta-glucosidase (818 aa).

D222 is an active-site residue. In terms of domain architecture, PA14 spans 386–538; the sequence is VFSGEMTVEY…GDAGIAEAVE (153 aa).

The protein belongs to the glycosyl hydrolase 3 family.

It localises to the cytoplasm. It carries out the reaction Hydrolysis of terminal, non-reducing beta-D-glucosyl residues with release of beta-D-glucose.. In terms of biological role, involved in modifying a vir-inducing plant signal molecule. Hydrolyzes coniferin but not cellobiose. The polypeptide is Beta-glucosidase (cbg-1) (Rhizobium radiobacter (Agrobacterium tumefaciens)).